The chain runs to 432 residues: tRNA(Ile)-lysidine synthase (432 aa).

20-25 provides a ligand contact to ATP; sequence SGGLDS.

It belongs to the tRNA(Ile)-lysidine synthase family.

Its subcellular location is the cytoplasm. The catalysed reaction is cytidine(34) in tRNA(Ile2) + L-lysine + ATP = lysidine(34) in tRNA(Ile2) + AMP + diphosphate + H(+). In terms of biological role, ligates lysine onto the cytidine present at position 34 of the AUA codon-specific tRNA(Ile) that contains the anticodon CAU, in an ATP-dependent manner. Cytidine is converted to lysidine, thus changing the amino acid specificity of the tRNA from methionine to isoleucine. This Shigella flexneri protein is tRNA(Ile)-lysidine synthase.